Consider the following 306-residue polypeptide: tRNA pseudouridine synthase B (306 aa).

Catalysis depends on Asp38, which acts as the Nucleophile.

The protein belongs to the pseudouridine synthase TruB family. Type 1 subfamily.

It catalyses the reaction uridine(55) in tRNA = pseudouridine(55) in tRNA. Its function is as follows. Responsible for synthesis of pseudouridine from uracil-55 in the psi GC loop of transfer RNAs. The polypeptide is tRNA pseudouridine synthase B (Syntrophotalea carbinolica (strain DSM 2380 / NBRC 103641 / GraBd1) (Pelobacter carbinolicus)).